An 859-amino-acid chain; its full sequence is Cleavage factor two protein 2 (859 aa).

A disordered region spans residues 560–611; sequence PDDSDNVNQNSRKRPLKDGAKTTSPVNEEDNKNEEEDGYNMSDPISKRSKHR. Acidic residues predominate over residues 586-597; sequence NEEDNKNEEEDG.

As to quaternary structure, component of the cleavage and polyadenylation factor (CPF) complex, which is composed of at least PTI1, SYC1, SSU72, GLC7, MPE1, REF2, PFS2, PTA1, YSH1/BRR5, SWD2, CFT2/YDH1, YTH1, CFT1/YHH1, FIP1 and PAP1. Interacts with the CTD domain of RPB1/RNA polymerase II; the interaction is enhanced upon phosphorylation of the RPB1 CTD domain. Interacts with PCF11.

It is found in the nucleus. Functionally, RNA-binding component of the cleavage and polyadenylation factor (CPF) complex, which plays a key role in polyadenylation-dependent pre-mRNA 3'-end formation and cooperates with cleavage factors including the CFIA complex and NAB4/CFIB. May be involved in poly(A)-site recognition. May be involved in the association of the CPF, CPFIA and RNA polymerase II complexes. This is Cleavage factor two protein 2 (CFT2) from Saccharomyces cerevisiae (strain ATCC 204508 / S288c) (Baker's yeast).